A 667-amino-acid polypeptide reads, in one-letter code: Acetoacetyl-CoA synthetase (667 aa).

This sequence belongs to the ATP-dependent AMP-binding enzyme family.

The protein localises to the cytoplasm. Its subcellular location is the cytosol. It catalyses the reaction acetoacetate + ATP + CoA = acetoacetyl-CoA + AMP + diphosphate. Converts acetoacetate to acetoacetyl-CoA in the cytosol. Ketone body-utilizing enzyme, responsible for the synthesis of cholesterol and fatty acids. This chain is Acetoacetyl-CoA synthetase (AACS), found in Gallus gallus (Chicken).